The chain runs to 142 residues: Translation initiation factor 2 subunit beta (142 aa).

The protein belongs to the eIF-2-beta/eIF-5 family. Heterotrimer composed of an alpha, a beta and a gamma chain.

Its function is as follows. eIF-2 functions in the early steps of protein synthesis by forming a ternary complex with GTP and initiator tRNA. This Thermococcus kodakarensis (strain ATCC BAA-918 / JCM 12380 / KOD1) (Pyrococcus kodakaraensis (strain KOD1)) protein is Translation initiation factor 2 subunit beta.